The following is a 291-amino-acid chain: Phosphate import ATP-binding protein PstB (291 aa).

The 242-residue stretch at 45 to 286 (YSTQNLDLWY…PADKQTEDYI (242 aa)) folds into the ABC transporter domain. 77–84 (GPSGCGKS) provides a ligand contact to ATP.

Belongs to the ABC transporter superfamily. Phosphate importer (TC 3.A.1.7) family. In terms of assembly, the complex is composed of two ATP-binding proteins (PstB), two transmembrane proteins (PstC and PstA) and a solute-binding protein (PstS).

Its subcellular location is the cell membrane. It carries out the reaction phosphate(out) + ATP + H2O = ADP + 2 phosphate(in) + H(+). Part of the ABC transporter complex PstSACB involved in phosphate import. Responsible for energy coupling to the transport system. In Staphylococcus epidermidis (strain ATCC 35984 / DSM 28319 / BCRC 17069 / CCUG 31568 / BM 3577 / RP62A), this protein is Phosphate import ATP-binding protein PstB.